A 54-amino-acid polypeptide reads, in one-letter code: Metallothionein-4 (54 aa).

Belongs to the metallothionein superfamily. Type 11 family.

In Yarrowia lipolytica (strain CLIB 122 / E 150) (Yeast), this protein is Metallothionein-4 (MTP4).